The following is a 138-amino-acid chain: MRTLWIMAVLLVGVEGHLMQFENMIKKVTGRSGIWWYGSYGCYCGKGGQGLPQDASDRCCFVHDCCYGKVNGCDPKDDFYVYSSENRDIVCGEDNPCTKEICECDKAAAICFRDNMDTYQNKYWFYPSSNCNEESEPC.

The N-terminal stretch at 1-16 is a signal peptide; the sequence is MRTLWIMAVLLVGVEG. 7 disulfide bridges follow: C42-C131, C44-C60, C59-C111, C65-C138, C66-C104, C73-C97, and C91-C102. The Ca(2+) site is built by Y43, G45, and G47. The active site involves H63. D64 lines the Ca(2+) pocket. D105 is an active-site residue.

This sequence belongs to the phospholipase A2 family. Group II subfamily. D49 sub-subfamily. As to quaternary structure, homodimer. It depends on Ca(2+) as a cofactor. Expressed by the venom gland.

The protein localises to the secreted. It carries out the reaction a 1,2-diacyl-sn-glycero-3-phosphocholine + H2O = a 1-acyl-sn-glycero-3-phosphocholine + a fatty acid + H(+). In terms of biological role, snake venom phospholipase A2 (PLA2) that has high lipolytic activity. PLA2 catalyzes the calcium-dependent hydrolysis of the 2-acyl groups in 3-sn-phosphoglycerides. The chain is Acidic phospholipase A2 6 from Craspedocephalus gramineus (Bamboo pit viper).